The sequence spans 77 residues: Acyl carrier protein (77 aa).

Residues 1–76 (MSIEERVKKI…SAIDYVAKAN (76 aa)) form the Carrier domain. An O-(pantetheine 4'-phosphoryl)serine modification is found at Ser-36.

This sequence belongs to the acyl carrier protein (ACP) family. Post-translationally, 4'-phosphopantetheine is transferred from CoA to a specific serine of apo-ACP by AcpS. This modification is essential for activity because fatty acids are bound in thioester linkage to the sulfhydryl of the prosthetic group.

The protein localises to the cytoplasm. The protein operates within lipid metabolism; fatty acid biosynthesis. Its function is as follows. Carrier of the growing fatty acid chain in fatty acid biosynthesis. The protein is Acyl carrier protein of Haemophilus ducreyi (strain 35000HP / ATCC 700724).